The primary structure comprises 173 residues: Lectin BRA-2 (173 aa).

N-linked (GlcNAc...) asparagine glycosylation occurs at Asn-39. Cystine bridges form between Cys-47/Cys-61, Cys-78/Cys-168, and Cys-144/Cys-160. Residues 51 to 170 enclose the C-type lectin domain; the sequence is PNGWVTSENK…NDRYNFVCEI (120 aa).

Homohexamer; disulfide-linked. In terms of tissue distribution, coelemic fluid.

Its function is as follows. Sugar-binding protein which recognizes specific carbohydrate structures and agglutinates a variety of animal cells by binding to cell-surface glycoproteins and glycolipids. Calcium-dependent lectin. Invertebrate lectins may be involved in defense functions. This is Lectin BRA-2 from Megabalanus rosa (Acorn barnacle).